The primary structure comprises 229 residues: Ribonuclease 3 (229 aa).

The 132-residue stretch at 5–136 (LAELERALGI…VIGAIYLDQG (132 aa)) folds into the RNase III domain. Glutamate 49 lines the Mg(2+) pocket. Residue aspartate 53 is part of the active site. Mg(2+) contacts are provided by aspartate 122 and glutamate 125. Residue glutamate 125 is part of the active site. The 69-residue stretch at 161–229 (DPTTRLQEIV…AQAALADIDR (69 aa)) folds into the DRBM domain.

The protein belongs to the ribonuclease III family. Homodimer. Requires Mg(2+) as cofactor.

It is found in the cytoplasm. The catalysed reaction is Endonucleolytic cleavage to 5'-phosphomonoester.. Digests double-stranded RNA. Involved in the processing of primary rRNA transcript to yield the immediate precursors to the large and small rRNAs (23S and 16S). Processes some mRNAs, and tRNAs when they are encoded in the rRNA operon. Processes pre-crRNA and tracrRNA of type II CRISPR loci if present in the organism. This Chloroflexus aggregans (strain MD-66 / DSM 9485) protein is Ribonuclease 3.